Here is a 149-residue protein sequence, read N- to C-terminus: Protein SprT-like (149 aa).

In terms of domain architecture, SprT-like spans 4–144 (TDYVKQVSLE…GLCRGKLLLV (141 aa)). A Zn(2+)-binding site is contributed by H64. The active site involves E65. H68 is a Zn(2+) binding site.

It belongs to the SprT family. It depends on Zn(2+) as a cofactor.

It localises to the cytoplasm. The polypeptide is Protein SprT-like (Streptococcus pneumoniae serotype 4 (strain ATCC BAA-334 / TIGR4)).